The sequence spans 60 residues: Protein BNLF2a (60 aa).

The span at 14–26 shows a compositional bias: polar residues; that stretch reads SSACGLPGSSTET. Residues 14 to 34 form a disordered region; the sequence is SSACGLPGSSTETRPSHPCPE. The helical transmembrane segment at 41-59 threads the bilayer; sequence LRLLLVVLCVLFGLLCLLL.

The protein belongs to the lymphocryptovirus BNLF2a family. In terms of assembly, interacts with host TAP1 and TAP2.

It localises to the host endoplasmic reticulum membrane. In terms of biological role, participates in viral evasion from HLA class I-restricted T-cell immunity. Associates with host TAP1 and TAP2 and prevents TAP-mediated peptide transport and subsequent loading. The sequence is that of Protein BNLF2a from Homo sapiens (Human).